The chain runs to 600 residues: Integrator complex subunit 11 (600 aa).

Residues H68, H70, D72, H73, H157, and D178 each contribute to the Zn(2+) site. The HXHXDH motif signature appears at 68-73 (HFHLDH). The active site involves E203. K381 participates in a covalent cross-link: Glycyl lysine isopeptide (Lys-Gly) (interchain with G-Cter in SUMO). H414 is a Zn(2+) binding site. Residues K462 and K475 each participate in a glycyl lysine isopeptide (Lys-Gly) (interchain with G-Cter in SUMO) cross-link. Positions 469 to 479 (LLPEAKKPRLL) match the Nuclear localization signal motif.

It belongs to the metallo-beta-lactamase superfamily. RNA-metabolizing metallo-beta-lactamase-like family. INTS11 subfamily. Component of the Integrator complex, composed of core subunits INTS1, INTS2, INTS3, INTS4, INTS5, INTS6, INTS7, INTS8, INTS9/RC74, INTS10, INTS11/CPSF3L, INTS12, INTS13, INTS14 and INTS15. The core complex associates with protein phosphatase 2A subunits PPP2CA and PPP2R1A, to form the Integrator-PP2A (INTAC) complex. INTS11 is part of the RNA endonuclease subcomplex, composed of INTS4, INTS9, INTS11 and inositol hexakisphosphate (InsP6). Interacts with WDR73; interaction is required for the assembly of the RNA endonuclease subcomplex in the cytoplasm. Interacts with BRAT1; interaction is required for the assembly of the RNA endonuclease subcomplex and inhibits the endonuclease activity of INTS11 before formation of mature integrator complex. Zn(2+) is required as a cofactor. In terms of processing, sumoylated; sumoylation regulates its subcellular location and is required for integrator complex integrity.

The protein localises to the nucleus. The protein resides in the cytoplasm. Its activity is regulated as follows. The RNA endonuclease activity is inhibited by BRAT1 that forms hyrogen bond and hydrophobic interactions with the active site. In terms of biological role, RNA endonuclease component of the integrator complex, a multiprotein complex that terminates RNA polymerase II (Pol II) transcription in the promoter-proximal region of genes. The integrator complex provides a quality checkpoint during transcription elongation by driving premature transcription termination of transcripts that are unfavorably configured for transcriptional elongation: the complex terminates transcription by (1) catalyzing dephosphorylation of the C-terminal domain (CTD) of Pol II subunit POLR2A/RPB1 and SUPT5H/SPT5, (2) degrading the exiting nascent RNA transcript via endonuclease activity and (3) promoting the release of Pol II from bound DNA. The integrator complex is also involved in terminating the synthesis of non-coding Pol II transcripts, such as enhancer RNAs (eRNAs), small nuclear RNAs (snRNAs), telomerase RNAs and long non-coding RNAs (lncRNAs). Within the integrator complex, INTS11 constitutes the RNA endonuclease subunit that degrades exiting nascent RNA transcripts. Mediates recruitment of cytoplasmic dynein to the nuclear envelope, probably as component of the integrator complex. The sequence is that of Integrator complex subunit 11 from Mus musculus (Mouse).